Consider the following 477-residue polypeptide: Glutamyl-tRNA(Gln) amidotransferase subunit A (477 aa).

Residues lysine 76 and serine 151 each act as charge relay system in the active site. Catalysis depends on serine 175, which acts as the Acyl-ester intermediate.

This sequence belongs to the amidase family. GatA subfamily. In terms of assembly, heterotrimer of A, B and C subunits.

The enzyme catalyses L-glutamyl-tRNA(Gln) + L-glutamine + ATP + H2O = L-glutaminyl-tRNA(Gln) + L-glutamate + ADP + phosphate + H(+). In terms of biological role, allows the formation of correctly charged Gln-tRNA(Gln) through the transamidation of misacylated Glu-tRNA(Gln) in organisms which lack glutaminyl-tRNA synthetase. The reaction takes place in the presence of glutamine and ATP through an activated gamma-phospho-Glu-tRNA(Gln). This is Glutamyl-tRNA(Gln) amidotransferase subunit A from Chlorobium phaeobacteroides (strain BS1).